The sequence spans 262 residues: Small ribosomal subunit protein eS1 (262 aa).

This sequence belongs to the eukaryotic ribosomal protein eS1 family. As to quaternary structure, component of the small ribosomal subunit. Mature ribosomes consist of a small (40S) and a large (60S) subunit. The 40S subunit contains about 33 different proteins and 1 molecule of RNA (18S). The 60S subunit contains about 49 different proteins and 3 molecules of RNA (25S, 5.8S and 5S).

Its subcellular location is the cytoplasm. The protein is Small ribosomal subunit protein eS1 of Brassica campestris (Field mustard).